The sequence spans 90 residues: UPF0237 protein BL1209.1 (90 aa).

The ACT domain occupies 5 to 79 (IITVVGQDTV…DDIGVRIRCQ (75 aa)).

Belongs to the UPF0237 family.

The protein is UPF0237 protein BL1209.1 of Bifidobacterium longum (strain NCC 2705).